We begin with the raw amino-acid sequence, 293 residues long: MSEKAGGVPAHLVSGFFGGLASVCALQPLDLLKTRLQQAQASSLRSVLREVRTTRELWRGTLPSALRTSIGSALYLSLLNYSRSALARGSEARTRSSLLPRLQSYQNLLTGALSRAAVGLVTMPITVIKVRYESTLYAYNGLAEATRHIWRSEGARGFFKGAAATTLRDAPYAGLYVLLYEQAKEMLPRALPATLLGADESGKLTAPASAMVNGVSAFLSASLATTLTAPFDTIKTRMQLQSHPVGFVQTLRHIVCEERARTLFDGLSLRLCRKAMSACIAWGIYEELLKLLH.

Solcar repeat units follow at residues 6–85, 102–186, and 208–291; these read GGVP…SRSA, LQSY…AKEM, and ASAM…LLKL. The next 6 helical transmembrane spans lie at 12–37, 60–86, 108–133, 161–184, 212–238, and 266–284; these read LVSG…TRLQ, GTLP…RSAL, LLTG…VRYE, GAAA…EQAK, VNGV…KTRM, and GLSL…AWGI.

Belongs to the mitochondrial carrier (TC 2.A.29) family. SLC25A38 subfamily.

Its subcellular location is the mitochondrion inner membrane. The catalysed reaction is glycine(in) = glycine(out). Functionally, mitochondrial glycine transporter that imports glycine into the mitochondrial matrix. Plays an important role in providing glycine for the first enzymatic step in heme biosynthesis, the condensation of glycine with succinyl-CoA to produce 5-aminolevulinate (ALA) in the mitochondrial matrix. This is Mitochondrial glycine transporter from Eremothecium gossypii (strain ATCC 10895 / CBS 109.51 / FGSC 9923 / NRRL Y-1056) (Yeast).